A 65-amino-acid polypeptide reads, in one-letter code: uncharacterized protein (65 aa).

Its subcellular location is the plastid. It localises to the chloroplast. This is an uncharacterized protein from Mesostigma viride (Green alga).